Reading from the N-terminus, the 622-residue chain is Condensin-2 complex subunit H2 (622 aa).

T19 carries the phosphothreonine modification. S95, S199, S223, and S227 each carry phosphoserine. The interval W207–A354 is disordered. Positions A262 to V273 are enriched in low complexity. The residue at position 282 (S282) is a Phosphoserine. Over residues T294–P312 the composition is skewed to basic and acidic residues.

The protein belongs to the CND2 H2 (condensin-2 subunit 2) family. Component of the condensin-2 complex, which contains the SMC2 and SMC4 heterodimer, and three non SMC subunits, NCAPG2, NCAPH2 and NCAPD3 that probably regulate the complex.

The protein resides in the nucleus. Functionally, regulatory subunit of the condensin-2 complex, a complex that seems to provide chromosomes with an additional level of organization and rigidity and in establishing mitotic chromosome architecture. May promote the resolution of double-strand DNA catenanes (intertwines) between sister chromatids. Condensin-mediated compaction likely increases tension in catenated sister chromatids, providing directionality for type II topoisomerase-mediated strand exchanges toward chromatid decatenation. Required for decatenation of chromatin bridges at anaphase. Early in neurogenesis, may play an essential role to ensure accurate mitotic chromosome condensation in neuron stem cells, ultimately affecting neuron pool and cortex size. Seems to have lineage-specific role in T-cell development. The chain is Condensin-2 complex subunit H2 (NCAPH2) from Bos taurus (Bovine).